The sequence spans 302 residues: tRNA dimethylallyltransferase (302 aa).

8 to 15 (GSSGSGKS) provides a ligand contact to ATP. 10 to 15 (SGSGKS) contacts substrate. Residues 33-36 (DSLS) are interaction with substrate tRNA.

Belongs to the IPP transferase family. In terms of assembly, monomer. Requires Mg(2+) as cofactor.

The catalysed reaction is adenosine(37) in tRNA + dimethylallyl diphosphate = N(6)-dimethylallyladenosine(37) in tRNA + diphosphate. Functionally, catalyzes the transfer of a dimethylallyl group onto the adenine at position 37 in tRNAs that read codons beginning with uridine, leading to the formation of N6-(dimethylallyl)adenosine (i(6)A). This is tRNA dimethylallyltransferase from Helicobacter hepaticus (strain ATCC 51449 / 3B1).